The sequence spans 212 residues: Large ribosomal subunit protein uL3 (212 aa).

The segment at 130-155 (KRGNMTHGSKNHRLPGSTGAGTTPGR) is disordered.

The protein belongs to the universal ribosomal protein uL3 family. As to quaternary structure, part of the 50S ribosomal subunit. Forms a cluster with proteins L14 and L19.

Functionally, one of the primary rRNA binding proteins, it binds directly near the 3'-end of the 23S rRNA, where it nucleates assembly of the 50S subunit. The chain is Large ribosomal subunit protein uL3 from Rippkaea orientalis (strain PCC 8801 / RF-1) (Cyanothece sp. (strain PCC 8801)).